Consider the following 200-residue polypeptide: Small ribosomal subunit protein uS4 (200 aa).

Residues 22–43 (TGKELERRPYAPGQHGPTQRKK) are disordered. The 79-residue stretch at 92–170 (QRLDNIVYRL…VPEYVTFDAE (79 aa)) folds into the S4 RNA-binding domain.

Belongs to the universal ribosomal protein uS4 family. As to quaternary structure, part of the 30S ribosomal subunit. Contacts protein S5. The interaction surface between S4 and S5 is involved in control of translational fidelity.

Functionally, one of the primary rRNA binding proteins, it binds directly to 16S rRNA where it nucleates assembly of the body of the 30S subunit. In terms of biological role, with S5 and S12 plays an important role in translational accuracy. The chain is Small ribosomal subunit protein uS4 from Listeria monocytogenes serotype 4b (strain F2365).